The sequence spans 51 residues: UPF0391 membrane protein PsycPRwf_2202 (51 aa).

Transmembrane regions (helical) follow at residues 6–26 and 27–47; these read IIFA…VAGL and SQNF…IGFI.

Belongs to the UPF0391 family.

It localises to the cell membrane. The protein is UPF0391 membrane protein PsycPRwf_2202 of Psychrobacter sp. (strain PRwf-1).